We begin with the raw amino-acid sequence, 167 residues long: Epithelial membrane protein 2 (167 aa).

A helical membrane pass occupies residues 1-21 (MLVLLAFIIAFHITSAALLFI). 3 N-linked (GlcNAc...) asparagine glycosylation sites follow: Asn44, Asn47, and Asn52. 3 helical membrane-spanning segments follow: residues 67–87 (TMILSTILCCIAFFIFVLQLF), 95–115 (FVLTSIIQLMSCLCVMIAASI), and 143–163 (YILAWVAFACTFISGMMYLIL).

The protein belongs to the PMP-22/EMP/MP20 family. Interacts with PTK2; regulates PTK2 activation and localization. Interacts with ITGB3; regulates the levels of the heterodimer ITGA5-ITGB3 integrin surface expression. Interacts with P2RX7 (via C-terminus). Interacts with ITGB1; the interaction may be direct or indirect and ITGB1 has a heterodimer form.

Its subcellular location is the golgi apparatus membrane. The protein localises to the cell membrane. The protein resides in the apical cell membrane. It localises to the membrane raft. It is found in the cytoplasm. Its subcellular location is the nucleus. The protein localises to the perinuclear region. In terms of biological role, functions as a key regulator of cell membrane composition by regulating protein surface expression. Also, plays a role in regulation of processes including cell migration, cell proliferation, cell contraction and cell adhesion. Regulates transepithelial migration of neutrophils into the alveolar lumen, potentially via mediation of cell surface expression of adhesion markers and lipid raft formation. Negatively regulates caveolae formation by reducing CAV1 expression and CAV1 amount by increasing lysosomal degradation. Facilitates surface trafficking and the formation of lipid rafts bearing GPI-anchor proteins. Regulates surface expression of MHC1 and ICAM1 proteins increasing susceptibility to T-cell mediated cytotoxicity. Regulates the plasma membrane expression of the integrin heterodimers ITGA6-ITGB1, ITGA5-ITGB3 and ITGA5-ITGB1 resulting in modulation of cell-matrix adhesion. Also regulates many processes through PTK2. Regulates blood vessel endothelial cell migration and angiogenesis by regulating VEGF protein expression through PTK2 activation. Regulates cell migration and cell contraction through PTK2 and SRC activation. Regulates focal adhesion density, F-actin conformation and cell adhesion capacity through interaction with PTK2. Positively regulates cell proliferation. Plays a role during cell death and cell blebbing. Promotes angiogenesis and vasculogenesis through induction of VEGFA via a HIF1A-dependent pathway. Also plays a role in embryo implantation by regulating surface trafficking of integrin heterodimer ITGA5-ITGB3. Plays a role in placental angiogenesis and uterine natural killer cell regulation at the maternal-fetal placental interface, however not required in the maternal tissues for a viable pregnancy. Involved in the early stages of embryogenic development and cardiogenesis, potentially via regulation of epithelial-mesenchymal transition timing. May play a role in glomerular filtration. The sequence is that of Epithelial membrane protein 2 (EMP2) from Pan troglodytes (Chimpanzee).